We begin with the raw amino-acid sequence, 123 residues long: Small ribosomal subunit protein uS12 (123 aa).

Positions methionine 1–glutamine 29 are disordered. Aspartate 89 carries the 3-methylthioaspartic acid modification.

It belongs to the universal ribosomal protein uS12 family. As to quaternary structure, part of the 30S ribosomal subunit. Contacts proteins S8 and S17. May interact with IF1 in the 30S initiation complex.

Functionally, with S4 and S5 plays an important role in translational accuracy. Its function is as follows. Interacts with and stabilizes bases of the 16S rRNA that are involved in tRNA selection in the A site and with the mRNA backbone. Located at the interface of the 30S and 50S subunits, it traverses the body of the 30S subunit contacting proteins on the other side and probably holding the rRNA structure together. The combined cluster of proteins S8, S12 and S17 appears to hold together the shoulder and platform of the 30S subunit. This is Small ribosomal subunit protein uS12 from Novosphingobium aromaticivorans (strain ATCC 700278 / DSM 12444 / CCUG 56034 / CIP 105152 / NBRC 16084 / F199).